Here is a 726-residue protein sequence, read N- to C-terminus: Catalase-peroxidase (726 aa).

Residues Met1–Ser33 form a disordered region. Positions Trp105–Tyr226 form a cross-link, tryptophyl-tyrosyl-methioninium (Trp-Tyr) (with M-252). The active-site Proton acceptor is the His106. The tryptophyl-tyrosyl-methioninium (Tyr-Met) (with W-105) cross-link spans Tyr226–Met252. His267 contacts heme b.

It belongs to the peroxidase family. Peroxidase/catalase subfamily. As to quaternary structure, homodimer or homotetramer. The cofactor is heme b. Post-translationally, formation of the three residue Trp-Tyr-Met cross-link is important for the catalase, but not the peroxidase activity of the enzyme.

It carries out the reaction H2O2 + AH2 = A + 2 H2O. It catalyses the reaction 2 H2O2 = O2 + 2 H2O. Bifunctional enzyme with both catalase and broad-spectrum peroxidase activity. This chain is Catalase-peroxidase, found in Salmonella schwarzengrund (strain CVM19633).